Consider the following 771-residue polypeptide: ATP-dependent DNA helicase UvrD1 (771 aa).

The segment at 1–21 is disordered; it reads MSVHATDAKPPGPSPADQLLD. Residues 21–311 enclose the UvrD-like helicase ATP-binding domain; the sequence is DGLNPQQRQA…ILLEQNYRST (291 aa). ATP contacts are provided by residues 45–50 and Arg309; that span reads GSGKTA. A UvrD-like helicase C-terminal domain is found at 312-603; that stretch reads QNILSAANSV…TLMTLHTAKG (292 aa). The disordered stretch occupies residues 691–716; the sequence is FSAPVSGAGRFGSARPSPTRSGASRR.

Belongs to the helicase family. UvrD subfamily. Monomer. It depends on Mg(2+) as a cofactor.

It carries out the reaction Couples ATP hydrolysis with the unwinding of duplex DNA by translocating in the 3'-5' direction.. It catalyses the reaction ATP + H2O = ADP + phosphate + H(+). Its function is as follows. DNA-dependent ATPase, acting on dsDNA with a 3'-ssDNA tail, unwinding with 3'-to 5'-polarity. Also highly efficient on nicked DNA. Involved in the post-incision events of nucleotide excision repair. This chain is ATP-dependent DNA helicase UvrD1 (uvrD1), found in Mycobacterium bovis (strain ATCC BAA-935 / AF2122/97).